Reading from the N-terminus, the 206-residue chain is Small ribosomal subunit protein uS4 (206 aa).

Residues 94 to 157 (RRLDNVVYRL…RSRTYFKNLV (64 aa)) enclose the S4 RNA-binding domain.

This sequence belongs to the universal ribosomal protein uS4 family. In terms of assembly, part of the 30S ribosomal subunit. Contacts protein S5. The interaction surface between S4 and S5 is involved in control of translational fidelity.

Its function is as follows. One of the primary rRNA binding proteins, it binds directly to 16S rRNA where it nucleates assembly of the body of the 30S subunit. Functionally, with S5 and S12 plays an important role in translational accuracy. The sequence is that of Small ribosomal subunit protein uS4 from Chloroflexus aurantiacus (strain ATCC 29364 / DSM 637 / Y-400-fl).